The primary structure comprises 384 residues: A-type ATP synthase subunit C (384 aa).

This sequence belongs to the V-ATPase V0D/AC39 subunit family. As to quaternary structure, has multiple subunits with at least A(3), B(3), C, D, E, F, H, I and proteolipid K(x).

The protein localises to the cell membrane. In terms of biological role, component of the A-type ATP synthase that produces ATP from ADP in the presence of a proton gradient across the membrane. This is A-type ATP synthase subunit C from Methanobrevibacter smithii (strain ATCC 35061 / DSM 861 / OCM 144 / PS).